A 324-amino-acid polypeptide reads, in one-letter code: Phosphomevalonate decarboxylase (324 aa).

It belongs to the phosphomevalonate decarboxylase family.

It catalyses the reaction (R)-5-phosphomevalonate + ATP = isopentenyl phosphate + ADP + phosphate + CO2. Is strongly inhibited by 6-fluoromevalonate monophosphate but shows negligible inhibition by 6-fluoromevalonate diphosphate (a potent inhibitor of the classical mevalonate pathway). Catalyzes the decarboxylation of mevalonate 5-phosphate (MVAP) to isopentenyl phosphate (IP). Functions in an alternate mevalonate (MVA) pathway leading to isopentenyl diphosphate (IPP), a key precursor for the biosynthesis of isoprenoid compounds such as archaeal membrane lipids. The chain is Phosphomevalonate decarboxylase (mvaD) from Haloferax volcanii (strain ATCC 29605 / DSM 3757 / JCM 8879 / NBRC 14742 / NCIMB 2012 / VKM B-1768 / DS2) (Halobacterium volcanii).